We begin with the raw amino-acid sequence, 421 residues long: Vasopressin V1b receptor (421 aa).

At 1-35 (MDSEPSWTATPSPGGTLFVPNTTTPWLGRDEELAK) the chain is on the extracellular side. N21 is a glycosylation site (N-linked (GlcNAc...) asparagine). A helical transmembrane segment spans residues 36-59 (VEIGILATVLVLATGGNLAVLLIL). The Cytoplasmic portion of the chain corresponds to 60–71 (GLQGHKRSRMHL). Residues 72 to 93 (FVLHLALTDLGVALFQVLPQLL) traverse the membrane as a helical segment. At 94–108 (WDITYRFQGSDLLCR) the chain is on the extracellular side. C107 and C186 are disulfide-bonded. The helical transmembrane segment at 109 to 130 (AVKYLQVLSMFASTYMLLAMTL) threads the bilayer. The Cytoplasmic segment spans residues 131-151 (DRYLAVCHPLRSLQQPSQSTY). The chain crosses the membrane as a helical span at residues 152–173 (PLIAAPWLLAAILSLPQVFIFS). Over 174–202 (LREVIQGSGVLDCWADFYFSWGPRAYITW) the chain is Extracellular. Residues 203-223 (TTMAIFVLPVVVLTACYGLIC) traverse the membrane as a helical segment. At 224–280 (HEIYKNLKVKTQAGREERRGWPKSSSSAAAAATRGLPSRVSSISTISRAKIRTVKMT) the chain is on the cytoplasmic side. Residues 281–300 (FVIVLAYIACWAPFFSVQMW) traverse the membrane as a helical segment. Residues 301–318 (SVWDENAPNEDSTNVAFT) are Extracellular-facing. Residues 319–338 (ISMLLGNLSSCCNPWIYMGF) form a helical membrane-spanning segment. Residues 339 to 421 (NSHLLPRSLS…GEATMETSIS (83 aa)) lie on the Cytoplasmic side of the membrane. The segment at 399 to 421 (KPAGSLKDLEQVDGEATMETSIS) is disordered.

This sequence belongs to the G-protein coupled receptor 1 family. Vasopressin/oxytocin receptor subfamily.

It localises to the cell membrane. In terms of biological role, receptor for arginine vasopressin. The activity of this receptor is mediated by G proteins which activate a phosphatidyl-inositol-calcium second messenger system. The polypeptide is Vasopressin V1b receptor (Avpr1b) (Mus musculus (Mouse)).